We begin with the raw amino-acid sequence, 344 residues long: MMVIRPVERSDVSALMQLASKTGGGLTSLPANEATLSARIERAIKTWQGELPKSEQGYVFVLEDSETGTVAGICAIEVAVGLNDPWYNYRVGTLVHASKELNVYNALPTLFLSNDHTGSSELCTLFLDPDWRKEGNGYLLSKSRFMFMAAFRDKFNDKVVAEMRGVIDEHGYSPFWQSLGKRFFSMDFSRADFLCGTGQKAFIAELMPKHPIYTHFLSQEAQDVIGQVHPQTAPARAVLEKEGFRYRNYIDIFDGGPTLECDIDRVRAIRKSRLVEVAEGQPAQGDFPACLVANENYHHFRVVLARTDPATERLILTAAQLDALKCHAGDRVRLVRLCAEEKTA.

Leucine 125 contributes to the succinyl-CoA binding site. The Proton donor role is filled by histidine 229.

It belongs to the arginine N-succinyltransferase family.

It carries out the reaction succinyl-CoA + L-arginine = N(2)-succinyl-L-arginine + CoA + H(+). Its pathway is amino-acid degradation; L-arginine degradation via AST pathway; L-glutamate and succinate from L-arginine: step 1/5. In terms of biological role, catalyzes the transfer of succinyl-CoA to arginine to produce N(2)-succinylarginine. In Shigella flexneri, this protein is Arginine N-succinyltransferase.